We begin with the raw amino-acid sequence, 272 residues long: 2-dehydro-3-deoxyphosphooctonate aldolase (272 aa).

This sequence belongs to the KdsA family.

The protein localises to the cytoplasm. The enzyme catalyses D-arabinose 5-phosphate + phosphoenolpyruvate + H2O = 3-deoxy-alpha-D-manno-2-octulosonate-8-phosphate + phosphate. The protein operates within carbohydrate biosynthesis; 3-deoxy-D-manno-octulosonate biosynthesis; 3-deoxy-D-manno-octulosonate from D-ribulose 5-phosphate: step 2/3. It participates in bacterial outer membrane biogenesis; lipopolysaccharide biosynthesis. The polypeptide is 2-dehydro-3-deoxyphosphooctonate aldolase (Geotalea uraniireducens (strain Rf4) (Geobacter uraniireducens)).